We begin with the raw amino-acid sequence, 165 residues long: Growth arrest and DNA damage-inducible protein GADD45 alpha (165 aa).

T2 is modified (phosphothreonine).

Belongs to the GADD45 family. In terms of assembly, interacts with AURKA, PCNA, GADD45GIP1 and MAPK14.

The protein localises to the nucleus. Its function is as follows. Might affect PCNA interaction with some CDK (cell division protein kinase) complexes; stimulates DNA excision repair in vitro and inhibits entry of cells into S phase. In T-cells, functions as a regulator of p38 MAPKs by inhibiting p88 phosphorylation and activity. The chain is Growth arrest and DNA damage-inducible protein GADD45 alpha (GADD45A) from Cricetulus griseus (Chinese hamster).